Here is a 150-residue protein sequence, read N- to C-terminus: Large ribosomal subunit protein uL13 (150 aa).

A disordered region spans residues 128–150 (GSDHPHSAQEPKILSLNSESVTK).

The protein belongs to the universal ribosomal protein uL13 family. Part of the 50S ribosomal subunit.

Functionally, this protein is one of the early assembly proteins of the 50S ribosomal subunit, although it is not seen to bind rRNA by itself. It is important during the early stages of 50S assembly. The polypeptide is Large ribosomal subunit protein uL13 (Prochlorococcus marinus (strain NATL1A)).